We begin with the raw amino-acid sequence, 276 residues long: NH(3)-dependent NAD(+) synthetase (276 aa).

43–50 (GISGGVDS) lines the ATP pocket. Asp-49 serves as a coordination point for Mg(2+). Arg-146 serves as a coordination point for deamido-NAD(+). Thr-166 is an ATP binding site. Residue Glu-171 coordinates Mg(2+). Residues Lys-179 and Asp-186 each contribute to the deamido-NAD(+) site. ATP contacts are provided by Lys-195 and Thr-217. 266-267 (HK) lines the deamido-NAD(+) pocket.

The protein belongs to the NAD synthetase family. Homodimer.

It carries out the reaction deamido-NAD(+) + NH4(+) + ATP = AMP + diphosphate + NAD(+) + H(+). It functions in the pathway cofactor biosynthesis; NAD(+) biosynthesis; NAD(+) from deamido-NAD(+) (ammonia route): step 1/1. In terms of biological role, catalyzes the ATP-dependent amidation of deamido-NAD to form NAD. Uses ammonia as a nitrogen source. The sequence is that of NH(3)-dependent NAD(+) synthetase from Vibrio campbellii (strain ATCC BAA-1116).